We begin with the raw amino-acid sequence, 560 residues long: Protein NRT1/ PTR FAMILY 2.5 (560 aa).

Positions 1-20 (MADSKSGDTEVAHRSSDPSE) are disordered. 12 consecutive transmembrane segments (helical) span residues 34–54 (TLLG…VFLI), 77–97 (MLPV…PVIS), 101–121 (FISL…YLMP), 141–161 (ILYV…FTLA), 177–197 (FFNW…TAIV), 207–227 (LGFG…IAGV), 323–343 (AILR…PVAV), 372–392 (VIVL…IYPM), 404–424 (LQQV…SAVV), 441–461 (VLWL…HFPA), 480–500 (SLTS…IDVI), and 520–540 (YWVV…CSWF).

Belongs to the major facilitator superfamily. Proton-dependent oligopeptide transporter (POT/PTR) (TC 2.A.17) family. In terms of tissue distribution, expressed in the root epidermis or cortex.

It is found in the membrane. Its function is as follows. Transporter involved in a passive nitrate efflux. The polypeptide is Protein NRT1/ PTR FAMILY 2.5 (NPF2.5) (Arabidopsis thaliana (Mouse-ear cress)).